A 185-amino-acid polypeptide reads, in one-letter code: Ribosome-recycling factor (185 aa).

This sequence belongs to the RRF family.

It localises to the cytoplasm. Its function is as follows. Responsible for the release of ribosomes from messenger RNA at the termination of protein biosynthesis. May increase the efficiency of translation by recycling ribosomes from one round of translation to another. This chain is Ribosome-recycling factor, found in Campylobacter jejuni subsp. doylei (strain ATCC BAA-1458 / RM4099 / 269.97).